Consider the following 285-residue polypeptide: HTH-type transcriptional regulator MurR (285 aa).

The region spanning 1-77 is the HTH rpiR-type domain; that stretch reads MLYLTKISNA…MALIGEYSAS (77 aa). The H-T-H motif DNA-binding region spans 37–56; the sequence is SRQMAKQLGISQSSIVKFAQ. The region spanning 128 to 268 is the SIS domain; it reads IIDVISKAQF…FVGLVQLNDV (141 aa).

In terms of assembly, homotetramer.

It participates in amino-sugar metabolism; N-acetylmuramate degradation [regulation]. Its function is as follows. Represses the expression of the murPQ operon involved in the uptake and degradation of N-acetylmuramic acid (MurNAc). Binds to two adjacent inverted repeats within the operator region. MurNAc 6-phosphate, the substrate of MurQ, is the specific inducer that weakens binding of MurR to the operator. This chain is HTH-type transcriptional regulator MurR, found in Escherichia coli (strain B / BL21-DE3).